Consider the following 726-residue polypeptide: WD repeat and coiled-coil-containing protein (726 aa).

2 WD repeats span residues 55–98 and 154–194; these read GQFE…SDKN and KSSG…LNAC. The interval 502-574 is disordered; the sequence is RSYDGDQSPT…PNFIQPSDVS (73 aa). The segment covering 506–515 has biased composition (polar residues); the sequence is GDQSPTSSAN. Over residues 517 to 533 the composition is skewed to basic and acidic residues; the sequence is FDEKRNRLRMESFDTEP. Polar residues predominate over residues 550–574; the sequence is SGSTSPKSECQNSSPPNFIQPSDVS. Residues 581 to 609 adopt a coiled-coil conformation; it reads SISRNVERLCCNFAHLQQHLSELTDITRN.

In Xenopus laevis (African clawed frog), this protein is WD repeat and coiled-coil-containing protein (wdcp).